The sequence spans 692 residues: DNA ligase (692 aa).

Residues 1 to 14 (MQPDLFSTASQADA) are compositionally biased toward polar residues. A disordered region spans residues 1–27 (MQPDLFSTASQADANATPEEPDASNPA). Residues 54 to 58 (DAEYD), 103 to 104 (SL), and Glu134 each bind NAD(+). Lys136 acts as the N6-AMP-lysine intermediate in catalysis. NAD(+) is bound by residues Arg157, Glu194, Lys311, and Lys335. Positions 429, 432, 447, and 454 each coordinate Zn(2+). Residues 612–692 (NKPKPFAGKT…ALLQLLDTHE (81 aa)) enclose the BRCT domain.

The protein belongs to the NAD-dependent DNA ligase family. LigA subfamily. Mg(2+) is required as a cofactor. The cofactor is Mn(2+).

The enzyme catalyses NAD(+) + (deoxyribonucleotide)n-3'-hydroxyl + 5'-phospho-(deoxyribonucleotide)m = (deoxyribonucleotide)n+m + AMP + beta-nicotinamide D-nucleotide.. In terms of biological role, DNA ligase that catalyzes the formation of phosphodiester linkages between 5'-phosphoryl and 3'-hydroxyl groups in double-stranded DNA using NAD as a coenzyme and as the energy source for the reaction. It is essential for DNA replication and repair of damaged DNA. The protein is DNA ligase of Janthinobacterium sp. (strain Marseille) (Minibacterium massiliensis).